We begin with the raw amino-acid sequence, 313 residues long: MAMAERPRPGWASYHNPNTNSCQDLGNSILLLLGLIICINIGINMVTLLWRRLRGFLHQVFRVICEKEASKLRSPGKQTQPSKHSSPAVHLRCTMDAVKMTVTPPPTRRRHRRGSSSRRARRPVAWAPDTDDDDDEKPPHQHTAACSHNWDYPEDWEGLQTAQRFWTPWAQDTLEPPTQTIRFQQTIEGRPLKREMQSDLGLEAYVYPVNPPLPSPQILSHKNSGGGAGAGAQAEQEQCAPAEPPILGPANVPDIPRRRSSGRVTYDARDVRRRLRELTREVEALSHCYPLASGSSTAEGTRKDWVYRSMTER.

The helical transmembrane segment at 29–49 (ILLLLGLIICINIGINMVTLL) threads the bilayer. Disordered regions lie at residues 71-90 (KLRSPGKQTQPSKHSSPAVH), 97-151 (AVKM…HNWD), 243-263 (EPPILGPANVPDIPRRRSSGR), and 291-313 (LASGSSTAEGTRKDWVYRSMTER). Over residues 76 to 85 (GKQTQPSKHS) the composition is skewed to polar residues. Over residues 107 to 122 (TRRRHRRGSSSRRARR) the composition is skewed to basic residues. Positions 263-289 (RVTYDARDVRRRLRELTREVEALSHCY) form a coiled coil. Residues 300-313 (GTRKDWVYRSMTER) are compositionally biased toward basic and acidic residues.

It localises to the membrane. Its subcellular location is the cytoplasm. Its function is as follows. Required for proper cytoplasm removal during spermatogenesis. The chain is Spermatid maturation protein 1 (SPEM1) from Bos taurus (Bovine).